A 327-amino-acid polypeptide reads, in one-letter code: E3 ubiquitin-protein ligase ZNRF4 (327 aa).

Positions 1–28 (MARFAWTRVAPVALVTFWLVLSLSPTDA) are cleaved as a signal peptide. Over 29–150 (QVNLSSVDFL…EPCPDPECHP (122 aa)) the chain is Lumenal. Asn-31 carries an N-linked (GlcNAc...) asparagine glycan. Residues 151–171 (VVVASWALARALALAASTLFV) form a helical membrane-spanning segment. Topologically, residues 172–327 (LRQLWPWVRG…AQSEATSELS (156 aa)) are cytoplasmic. Residues 209 to 252 (CAICLDDYEEGERLKILPCAHAYHCRCIDPWFSRAAQRSCPLCK) form an RING-type; atypical zinc finger. The span at 256–265 (ASTHDGSTDG) shows a compositional bias: polar residues. The segment at 256 to 279 (ASTHDGSTDGSVGGEEPPLPGHRP) is disordered.

In terms of assembly, interacts with CANX. As to expression, expressed exclusively in spermatids (at protein level).

Its subcellular location is the endoplasmic reticulum membrane. The catalysed reaction is S-ubiquitinyl-[E2 ubiquitin-conjugating enzyme]-L-cysteine + [acceptor protein]-L-lysine = [E2 ubiquitin-conjugating enzyme]-L-cysteine + N(6)-ubiquitinyl-[acceptor protein]-L-lysine.. It participates in protein modification; protein ubiquitination. Functionally, E3 ubiquitin-protein ligase that acts as a negative regulator of NOD2 signaling by mediating ubiquitination and degradation of RIPK2. Also catalyzes ubiquitination and proteasomal degradation of CANX within the endoplasmic reticulum. Could have a role in spermatogenesis. The chain is E3 ubiquitin-protein ligase ZNRF4 from Mus musculus (Mouse).